We begin with the raw amino-acid sequence, 837 residues long: Periplasmic nitrate reductase (837 aa).

The tat-type signal signal peptide spans 1 to 33 (MTTPKLDRRQVLKLEAAAMAALAGGIAMPAAAA). The 57-residue stretch at 44-100 (LKWDKAACRFCGTGCSVMVATKENRVVATHGDTKSEVNRGLNCVKGYFLSKIMYGHD) folds into the 4Fe-4S Mo/W bis-MGD-type domain. Cys51, Cys54, Cys58, and Cys86 together coordinate [4Fe-4S] cluster. Mo-bis(molybdopterin guanine dinucleotide) is bound by residues Lys88, Gln155, Asn180, Cys184, 217 to 224 (WGSNMAEM), 248 to 252 (STFEH), 267 to 269 (QTD), Met378, Gln382, Asn488, 514 to 515 (SD), Lys537, Asp564, and 724 to 733 (TGRVLEHWHS). Trp800 provides a ligand contact to substrate. Residues Asn808 and Lys825 each coordinate Mo-bis(molybdopterin guanine dinucleotide).

The protein belongs to the prokaryotic molybdopterin-containing oxidoreductase family. NasA/NapA/NarB subfamily. As to quaternary structure, component of the periplasmic nitrate reductase NapAB complex composed of NapA and NapB. [4Fe-4S] cluster is required as a cofactor. Requires Mo-bis(molybdopterin guanine dinucleotide) as cofactor. Predicted to be exported by the Tat system. The position of the signal peptide cleavage has not been experimentally proven.

The protein localises to the periplasm. The catalysed reaction is 2 Fe(II)-[cytochrome] + nitrate + 2 H(+) = 2 Fe(III)-[cytochrome] + nitrite + H2O. Catalytic subunit of the periplasmic nitrate reductase complex NapAB. Receives electrons from NapB and catalyzes the reduction of nitrate to nitrite. This Rhodopseudomonas palustris (strain BisB18) protein is Periplasmic nitrate reductase.